A 601-amino-acid polypeptide reads, in one-letter code: MNTMTDAAHLAADPRYDAAREIRAPRGTELHCKSWLTEAAYRMLQNNLDPDVAENPKHLVVYGGIGRAARDWACFDKILETLRELNDDESLLVQSGKPVGVFKTHPDAPRVLIANSNLVPKWANWEHFNALDRKGLFMYGQMTAGSWIYIGSQGIVQGTYETFAEAGRQHYSDRPSALLKQGLSPEGTAPGSGRSSAQVPGSHLAGRWILTAGLGGMGGAQPLAATLAGAVSLTIECQQSSIDFRLRTRYLDKQARDIDDALNLIRHHCERGEAVSIGLLGNAAELLPELVRRARAGGLKPDLVTDQTSAHDLVNGYLPAGWTVEQWRAAQRDPAQHAHLSAEAARSCAVHVQAMLDFQSMGIPTVDYGNNIRQVAFDQGVKNAFDFPGFVPAYIRPLFCEGRGPFRWVALSGDPEDIYKTDAKIKELFPHNAHVHRWLDMARERIAFQGLPARICWLGLGERHAAGLAFNEMVRKGELKAPIVIGRDHLDTGSVASPNRETEAMRDGTDAVSDWPLLNALLNTAGGATWVSLHHGGGVGMGYSQHAGVVIVADGTDAAARRLARVLVNDAGSGVMRHADAGYETAVACAKRNGLKLPMIG.

Residues 63–64 (GG) and Gln-141 contribute to the NAD(+) site. Positions 172–201 (SDRPSALLKQGLSPEGTAPGSGRSSAQVPG) are insert. A disordered region spans residues 179–200 (LKQGLSPEGTAPGSGRSSAQVP). Residues 216–218 (GMG), Glu-236, 282–283 (NA), 307–311 (QTSAH), 317–318 (YL), and Tyr-368 each bind NAD(+). Residue Cys-456 is part of the active site. Residue Gly-538 participates in NAD(+) binding.

The protein belongs to the urocanase family. The cofactor is NAD(+).

The protein localises to the cytoplasm. It catalyses the reaction 4-imidazolone-5-propanoate = trans-urocanate + H2O. It participates in amino-acid degradation; L-histidine degradation into L-glutamate; N-formimidoyl-L-glutamate from L-histidine: step 2/3. Functionally, catalyzes the conversion of urocanate to 4-imidazolone-5-propionate. In Ralstonia nicotianae (strain ATCC BAA-1114 / GMI1000) (Ralstonia solanacearum), this protein is Urocanate hydratase.